A 227-amino-acid polypeptide reads, in one-letter code: Transmembrane emp24 domain-containing protein 1 (227 aa).

An N-terminal signal peptide occupies residues 1 to 23; it reads MMAAGAALALALWLLMPPVEVGG. At 24-194 the chain is on the extracellular side; the sequence is AGPPPIQDGE…LQEGNLERVN (171 aa). In terms of domain architecture, GOLD spans 43–125; the sequence is KQCFYQSAPA…EKLVFFELIF (83 aa). A coiled-coil region spans residues 145-170; it reads EMLDVKMEDIKESIETMRTRLERSIQ. Residues 195–215 traverse the membrane as a helical segment; it reads FWSAVNVAVLLLVAVLQVCTL. At 216–227 the chain is on the cytoplasmic side; sequence KRFFQDKRPVPT. The COPII vesicle coat-binding motif lies at 218–219; that stretch reads FF. Positions 218 to 227 match the COPI vesicle coat-binding motif; sequence FFQDKRPVPT.

Belongs to the EMP24/GP25L family. As to quaternary structure, homodimer in endoplasmic reticulum, endoplasmic reticulum-Golgi intermediate compartment and cis-Golgi network. Interacts with IL1RL1. Interacts with RNF26; this interaction is important to modulate innate immune signaling through the cGAS-STING pathway. In terms of tissue distribution, widely expressed.

Its subcellular location is the cell membrane. It is found in the endoplasmic reticulum membrane. The protein localises to the golgi apparatus. It localises to the cis-Golgi network membrane. The protein resides in the endoplasmic reticulum-Golgi intermediate compartment membrane. In terms of biological role, potential role in vesicular protein trafficking, mainly in the early secretory pathway. May act as a cargo receptor at the lumenal side for incorporation of secretory cargo molecules into transport vesicles and may be involved in vesicle coat formation at the cytoplasmic side. Plays a positive role in IL-33-mediated IL-8 and IL-6 production by interacting with interleukin-33 receptor IL1RL1. Also plays a role in the modulation of innate immune signaling through the cGAS-STING pathway by interacting with RNF26. This is Transmembrane emp24 domain-containing protein 1 (TMED1) from Homo sapiens (Human).